The chain runs to 201 residues: Recombination protein RecR (201 aa).

The segment at 57–72 (CSDCRTFTEQDVCAIC) adopts a C4-type zinc-finger fold. Positions 81–176 (GLVCVVESPA…MASRIAHGVP (96 aa)) constitute a Toprim domain.

This sequence belongs to the RecR family.

Its function is as follows. May play a role in DNA repair. It seems to be involved in an RecBC-independent recombinational process of DNA repair. It may act with RecF and RecO. The protein is Recombination protein RecR of Pectobacterium atrosepticum (strain SCRI 1043 / ATCC BAA-672) (Erwinia carotovora subsp. atroseptica).